Reading from the N-terminus, the 287-residue chain is MSYTTRQIGAKNTLDYRVFIEKAGKVVSPFHDIPLYADEENQIFNMVVEIPRWTNAKLEITKEEAMNPIIQDTKKGKLRYVRNCFPHHGYIHNYGAFPQTWEDPNVAHPETKAYGDNDPLDVLEIGETIAYTGQVKQVKVLGVMALLDEGETDWKIIVIDVHDPLAPKLNDIEDVEKHLPGLLRATNEWFRIYKIPDGKPENQFAFSGEAKNRKYALDVIRECHEAWCQLVAGKAADDKKVSLANSTLQESVAYAPEVAAAVPAANPLPDAPIDKSIDKWFFISGSA.

Residue arginine 79 participates in diphosphate binding. Mg(2+) is bound by residues aspartate 116, aspartate 121, and aspartate 153.

It belongs to the PPase family. The cofactor is Mg(2+).

The protein resides in the cytoplasm. The catalysed reaction is diphosphate + H2O = 2 phosphate + H(+). In Eremothecium gossypii (strain ATCC 10895 / CBS 109.51 / FGSC 9923 / NRRL Y-1056) (Yeast), this protein is Inorganic pyrophosphatase (IPP1).